The following is a 341-amino-acid chain: Methionine import ATP-binding protein MetN 3 (341 aa).

The ABC transporter domain occupies 2 to 241 (ILLENVKKIY…PKQDITKRFV (240 aa)). Position 38-45 (38-45 (GYSGAGKS)) interacts with ATP.

This sequence belongs to the ABC transporter superfamily. Methionine importer (TC 3.A.1.24) family. As to quaternary structure, the complex is composed of two ATP-binding proteins (MetN), two transmembrane proteins (MetI) and a solute-binding protein (MetQ).

Its subcellular location is the cell membrane. It catalyses the reaction L-methionine(out) + ATP + H2O = L-methionine(in) + ADP + phosphate + H(+). It carries out the reaction D-methionine(out) + ATP + H2O = D-methionine(in) + ADP + phosphate + H(+). Its function is as follows. Part of the ABC transporter complex MetNIQ involved in methionine import. Responsible for energy coupling to the transport system. This is Methionine import ATP-binding protein MetN 3 from Bacillus cereus (strain ATCC 14579 / DSM 31 / CCUG 7414 / JCM 2152 / NBRC 15305 / NCIMB 9373 / NCTC 2599 / NRRL B-3711).